A 330-amino-acid polypeptide reads, in one-letter code: Phosphate acyltransferase (330 aa).

The protein belongs to the PlsX family. Homodimer. Probably interacts with PlsY.

It is found in the cytoplasm. The enzyme catalyses a fatty acyl-[ACP] + phosphate = an acyl phosphate + holo-[ACP]. It functions in the pathway lipid metabolism; phospholipid metabolism. Catalyzes the reversible formation of acyl-phosphate (acyl-PO(4)) from acyl-[acyl-carrier-protein] (acyl-ACP). This enzyme utilizes acyl-ACP as fatty acyl donor, but not acyl-CoA. In Streptococcus pneumoniae (strain 70585), this protein is Phosphate acyltransferase.